The primary structure comprises 169 residues: 6,7-dimethyl-8-ribityllumazine synthase (169 aa).

Residues Phe24, 58-60 (ALE), and 82-84 (AVV) contribute to the 5-amino-6-(D-ribitylamino)uracil site. 87–88 (ET) contributes to the (2S)-2-hydroxy-3-oxobutyl phosphate binding site. His90 serves as the catalytic Proton donor. 5-amino-6-(D-ribitylamino)uracil is bound at residue Asn115. Residue Arg129 participates in (2S)-2-hydroxy-3-oxobutyl phosphate binding.

The protein belongs to the DMRL synthase family.

It carries out the reaction (2S)-2-hydroxy-3-oxobutyl phosphate + 5-amino-6-(D-ribitylamino)uracil = 6,7-dimethyl-8-(1-D-ribityl)lumazine + phosphate + 2 H2O + H(+). Its pathway is cofactor biosynthesis; riboflavin biosynthesis; riboflavin from 2-hydroxy-3-oxobutyl phosphate and 5-amino-6-(D-ribitylamino)uracil: step 1/2. Its function is as follows. Catalyzes the formation of 6,7-dimethyl-8-ribityllumazine by condensation of 5-amino-6-(D-ribitylamino)uracil with 3,4-dihydroxy-2-butanone 4-phosphate. This is the penultimate step in the biosynthesis of riboflavin. This chain is 6,7-dimethyl-8-ribityllumazine synthase, found in Cupriavidus metallidurans (strain ATCC 43123 / DSM 2839 / NBRC 102507 / CH34) (Ralstonia metallidurans).